Here is a 237-residue protein sequence, read N- to C-terminus: Ribonuclease PH (237 aa).

Phosphate contacts are provided by residues Arg-86 and 124–126; that span reads GTR.

It belongs to the RNase PH family. In terms of assembly, homohexameric ring arranged as a trimer of dimers.

It carries out the reaction tRNA(n+1) + phosphate = tRNA(n) + a ribonucleoside 5'-diphosphate. Phosphorolytic 3'-5' exoribonuclease that plays an important role in tRNA 3'-end maturation. Removes nucleotide residues following the 3'-CCA terminus of tRNAs; can also add nucleotides to the ends of RNA molecules by using nucleoside diphosphates as substrates, but this may not be physiologically important. Probably plays a role in initiation of 16S rRNA degradation (leading to ribosome degradation) during starvation. This is Ribonuclease PH from Cereibacter sphaeroides (strain ATCC 17029 / ATH 2.4.9) (Rhodobacter sphaeroides).